A 1066-amino-acid chain; its full sequence is Kinesin-like protein Klp61F (1066 aa).

A Kinesin motor domain is found at 19–356; that stretch reads NIQVYVRVRP…LEYAHRAKNI (338 aa). 103–110 is an ATP binding site; the sequence is GQTGTGKT. A coiled-coil region spans residues 362-462; sequence VNQKLTKKTV…KTEENLLNTK (101 aa). Position 520 is a phosphothreonine (T520). Coiled-coil stretches lie at residues 540 to 569, 639 to 738, 808 to 875, and 889 to 918; these read DRMQ…QLSQ, LMSK…QIKN, CSML…LITE, and DLVQ…ELVR. T933 carries the post-translational modification Phosphothreonine. Phosphoserine is present on S949. Positions 990-1002 are enriched in polar residues; sequence ELSETETIMNSTP. Disordered regions lie at residues 990–1009 and 1016–1066; these read ELSE…VDGV and GTTR…ENVA. Residues 1033-1051 show a composition bias toward low complexity; it reads GGKRSSSLSRSLTPSKTSP. At S1043 the chain carries Phosphoserine. Residue T1045 is modified to Phosphothreonine. 2 positions are modified to phosphoserine: S1050 and S1054.

This sequence belongs to the TRAFAC class myosin-kinesin ATPase superfamily. Kinesin family. BimC subfamily. In terms of assembly, homotetramer. Consists of two pairs of polypeptides associated by coiled-coil interactions to form two homodimers. The homodimers are linked by lateral interactions between their coiled-coil regions to form a bipolar homotetramer consisting of a central rod with two motor domains projecting from either end. Parallel coiled coils extend from each pair of motor heads, switch to two antiparallel coiled coils in the central region and then back to parallel coiled coils. Interacts with Wee1. Post-translationally, phosphorylation is required for localization to mitotic spindles. Phosphorylation of Thr-933 during mitosis controls association with the spindle apparatus. Phosphorylated in vitro by Wee1.

It localises to the cytoplasm. The protein localises to the cytoskeleton. Its subcellular location is the spindle. It is found in the spindle pole. Its function is as follows. Important role in mitotic dividing cells. Microtubule motor required for spindle body separation. Slow plus-end directed microtubule motor capable of cross-linking and sliding apart antiparallel microtubules, thereby pushing apart the associated spindle poles during spindle assembly and function. Forms cross-links between microtubules within interpolar microtubule bundles. Contributes to the length of the metaphase spindle, maintains the prometaphase spindle by antagonizing Ncd, drives anaphase B, and also contributes to normal chromosome congression, kinetochore spacing, and anaphase A rates. Displays microtubule-stimulated ATPase activity. Required for normal fusome organization. Required in non-mitotic cells for transport of secretory proteins from the Golgi complex to the cell surface. The protein is Kinesin-like protein Klp61F of Drosophila melanogaster (Fruit fly).